A 92-amino-acid chain; its full sequence is Protein EMB-1 (92 aa).

Basic and acidic residues-rich tracts occupy residues 1–16 (MASQQEKKELDARARQ), 37–61 (AEGRSKGGQTRKEQLGGEGYHEMGR), and 72–92 (GGERAEQEGIDIDESKFRTKK). The disordered stretch occupies residues 1-92 (MASQQEKKEL…IDESKFRTKK (92 aa)).

It belongs to the small hydrophilic plant seed protein family. As to expression, expressed in embryogenic cells, somatic embryos and seeds at the later stages of development. In the embryos, expressed in the procambium, the root and shoot meristem and the protoderm of the cotyledons. Not detected in the endosperm or the aleurone layer, in young leaves or roots.

The protein localises to the nucleus. The polypeptide is Protein EMB-1 (Daucus carota (Wild carrot)).